A 141-amino-acid chain; its full sequence is Nucleoside diphosphate kinase (141 aa).

Residues Lys-11, Phe-59, Arg-87, Thr-93, Arg-104, and Asn-114 each contribute to the ATP site. Catalysis depends on His-117, which acts as the Pros-phosphohistidine intermediate.

This sequence belongs to the NDK family. Homotetramer. Requires Mg(2+) as cofactor.

The protein localises to the cytoplasm. The catalysed reaction is a 2'-deoxyribonucleoside 5'-diphosphate + ATP = a 2'-deoxyribonucleoside 5'-triphosphate + ADP. It catalyses the reaction a ribonucleoside 5'-diphosphate + ATP = a ribonucleoside 5'-triphosphate + ADP. In terms of biological role, major role in the synthesis of nucleoside triphosphates other than ATP. The ATP gamma phosphate is transferred to the NDP beta phosphate via a ping-pong mechanism, using a phosphorylated active-site intermediate. In Polynucleobacter asymbioticus (strain DSM 18221 / CIP 109841 / QLW-P1DMWA-1) (Polynucleobacter necessarius subsp. asymbioticus), this protein is Nucleoside diphosphate kinase.